The following is a 337-amino-acid chain: UDP-3-O-acylglucosamine N-acyltransferase (337 aa).

The Proton acceptor role is filled by His-238.

The protein belongs to the transferase hexapeptide repeat family. LpxD subfamily. In terms of assembly, homotrimer.

The enzyme catalyses a UDP-3-O-[(3R)-3-hydroxyacyl]-alpha-D-glucosamine + a (3R)-hydroxyacyl-[ACP] = a UDP-2-N,3-O-bis[(3R)-3-hydroxyacyl]-alpha-D-glucosamine + holo-[ACP] + H(+). Its pathway is bacterial outer membrane biogenesis; LPS lipid A biosynthesis. Its function is as follows. Catalyzes the N-acylation of UDP-3-O-acylglucosamine using 3-hydroxyacyl-ACP as the acyl donor. Is involved in the biosynthesis of lipid A, a phosphorylated glycolipid that anchors the lipopolysaccharide to the outer membrane of the cell. The protein is UDP-3-O-acylglucosamine N-acyltransferase of Xanthomonas euvesicatoria pv. vesicatoria (strain 85-10) (Xanthomonas campestris pv. vesicatoria).